The sequence spans 39 residues: Cytochrome b559 subunit beta (39 aa).

The chain crosses the membrane as a helical span at residues 14 to 30 (WLAVHGLAVPTVFFLGS). Histidine 18 is a heme binding site.

It belongs to the PsbE/PsbF family. As to quaternary structure, heterodimer of an alpha subunit and a beta subunit. PSII is composed of 1 copy each of membrane proteins PsbA, PsbB, PsbC, PsbD, PsbE, PsbF, PsbH, PsbI, PsbJ, PsbK, PsbL, PsbM, PsbT, PsbX, PsbY, PsbZ, Psb30/Ycf12, at least 3 peripheral proteins of the oxygen-evolving complex and a large number of cofactors. It forms dimeric complexes. The cofactor is heme b.

The protein localises to the plastid. It localises to the chloroplast thylakoid membrane. In terms of biological role, this b-type cytochrome is tightly associated with the reaction center of photosystem II (PSII). PSII is a light-driven water:plastoquinone oxidoreductase that uses light energy to abstract electrons from H(2)O, generating O(2) and a proton gradient subsequently used for ATP formation. It consists of a core antenna complex that captures photons, and an electron transfer chain that converts photonic excitation into a charge separation. This is Cytochrome b559 subunit beta from Cedrus deodara (Deodar cedar).